A 393-amino-acid chain; its full sequence is MDVCHTDPAELSSGEAKELQQIKWHRKQLLEDIQKLKDEIADVFAQIDCFESTEESRMAQKEKEMCIGRKKFNMDPNKGIQYLIEHKLLTSDVQDIAQFLYKGDGLNKTAIGTYLGEKDPINLQVLQAFVDCHEFANLNLVQALRQFLWSFRLPGEAQKIDRMMEAFAARYCLCNPGVFRSTDTCYVLSFSVIMLNTGLHNPNVRDRPPFERFVTMNRGINSGSDLPEEQLRNLFDSIKSEPFSIPEDDGGDLTHTFFNPDREGWLLKLGGRVKTWKRRWFILTDNCLYYFEFTTDKEPRGIIPLENLSVQKVEDPKKPFCLELYNPSCRGQKIKACKTDGDGKVVEGKHESYRISAANAEERDQWIEAIRASITRVPFYDLLSARKKKIVGK.

Residues 13 to 56 are a coiled coil; the sequence is SGEAKELQQIKWHRKQLLEDIQKLKDEIADVFAQIDCFESTEES. Positions 54–241 constitute an SEC7 domain; the sequence is EESRMAQKEK…RNLFDSIKSE (188 aa). The 117-residue stretch at 259 to 375 folds into the PH domain; sequence NPDREGWLLK…WIEAIRASIT (117 aa). A 1,2-diacyl-sn-glycero-3-phospho-(1D-myo-inositol-3,4,5-trisphosphate)-binding positions include 268 to 275, arginine 279, tyrosine 290, and arginine 300; that span reads KLGGRVKT. The segment at 386–393 is C-terminal autoinhibitory region; it reads RKKKIVGK.

Its subcellular location is the cell membrane. Promotes guanine-nucleotide exchange on ARF1 and ARF5. Promotes the activation of ARF factors through replacement of GDP with GTP. The polypeptide is Cytohesin-4 (Cyth4) (Mus musculus (Mouse)).